Reading from the N-terminus, the 299-residue chain is MATH domain and coiled-coil domain-containing protein At2g42460 (299 aa).

In terms of domain architecture, MATH spans Q7–I130. Positions F225–Q262 form a coiled coil.

In Arabidopsis thaliana (Mouse-ear cress), this protein is MATH domain and coiled-coil domain-containing protein At2g42460.